A 368-amino-acid polypeptide reads, in one-letter code: CST complex subunit STN1 (368 aa).

Residues 2–192 (AVSLGDDDAD…KCYDQPFKMP (191 aa)) form an interaction with CTC1 region. Positions 58–162 (VDVLGIVVYK…EIKATSFYKV (105 aa)) form a DNA-binding region, OB. Winged helix-turn-helix (wHTH) stretches follow at residues 201–295 (AGGS…NVTE) and 296–368 (QDKD…YIVL).

Belongs to the CTC1 family. As to quaternary structure, component of the CST complex.

The protein localises to the nucleus. It is found in the chromosome. The protein resides in the telomere. Functionally, component of the CST complex proposed to act as a specialized replication factor promoting DNA replication under conditions of replication stress or natural replication barriers such as the telomere duplex. The CST complex binds single-stranded DNA with high affinity in a sequence-independent manner, while isolated subunits bind DNA with low affinity by themselves. Initially the CST complex has been proposed to protect telomeres from DNA degradation. However, the CST complex has been shown to be involved in several aspects of telomere replication. This is CST complex subunit STN1 from Danio rerio (Zebrafish).